A 251-amino-acid chain; its full sequence is uncharacterized protein (251 aa).

A signal peptide spans 1 to 18 (MRILIILSIILCSFFARA).

It belongs to the MlaA family.

This is an uncharacterized protein from Rickettsia typhi (strain ATCC VR-144 / Wilmington).